A 355-amino-acid polypeptide reads, in one-letter code: uncharacterized protein (355 aa).

This is an uncharacterized protein from Aquifex aeolicus (strain VF5).